A 243-amino-acid chain; its full sequence is Small ribosomal subunit protein eS4 (243 aa).

The S4 RNA-binding domain maps to 43–105 (IPLLYIVRDY…TGEHYRVLPN (63 aa)).

The protein belongs to the eukaryotic ribosomal protein eS4 family.

The sequence is that of Small ribosomal subunit protein eS4 (rps4e) from Pyrococcus horikoshii (strain ATCC 700860 / DSM 12428 / JCM 9974 / NBRC 100139 / OT-3).